A 169-amino-acid chain; its full sequence is Regulator of sigma D (169 aa).

It belongs to the Rsd/AlgQ family. As to quaternary structure, interacts with RpoD.

The protein localises to the cytoplasm. Functionally, binds RpoD and negatively regulates RpoD-mediated transcription activation by preventing the interaction between the primary sigma factor RpoD with the catalytic core of the RNA polymerase and with promoter DNA. May be involved in replacement of the RNA polymerase sigma subunit from RpoD to RpoS during the transition from exponential growth to the stationary phase. In Yersinia pestis, this protein is Regulator of sigma D.